The sequence spans 349 residues: Beta-glucanase (349 aa).

The first 27 residues, 1 to 27 (MNIKKTAVKSALAVAAAAAALTTNVSA), serve as a signal peptide directing secretion. The GH16 domain occupies 28 to 197 (KDFSGAELYT…WVKVYKYTPG (170 aa)). The Nucleophile role is filled by Glu79. The active-site Proton donor is the Glu83. Residues 258–311 (SFNGQVPRDDEPAPQSSSSAPASSSSVPASSSSVPASSSSAFVPPSSSSATNAI) form a disordered region. Residues 270-307 (APQSSSSAPASSSSVPASSSSVPASSSSAFVPPSSSSA) show a composition bias toward low complexity. Tandem repeats lie at residues 271–277 (PQSSSSA), 278–284 (PASSSSV), 285–291 (PASSSSV), 292–298 (PASSSSA), and 301–307 (PPSSSSA). The 5 X 7 AA tandem repeats of P-X-S-S-S-S-X stretch occupies residues 271–307 (PQSSSSAPASSSSVPASSSSVPASSSSAFVPPSSSSA).

The protein belongs to the glycosyl hydrolase 16 family.

It carries out the reaction Hydrolysis of (1-&gt;4)-beta-D-glucosidic linkages in beta-D-glucans containing (1-&gt;3)- and (1-&gt;4)-bonds.. In Fibrobacter succinogenes (strain ATCC 19169 / S85), this protein is Beta-glucanase.